The chain runs to 300 residues: Ribosomal protein L11 methyltransferase (300 aa).

S-adenosyl-L-methionine-binding residues include threonine 152, glycine 173, aspartate 195, and asparagine 234.

It belongs to the methyltransferase superfamily. PrmA family.

It localises to the cytoplasm. It catalyses the reaction L-lysyl-[protein] + 3 S-adenosyl-L-methionine = N(6),N(6),N(6)-trimethyl-L-lysyl-[protein] + 3 S-adenosyl-L-homocysteine + 3 H(+). In terms of biological role, methylates ribosomal protein L11. The sequence is that of Ribosomal protein L11 methyltransferase from Paraburkholderia phytofirmans (strain DSM 17436 / LMG 22146 / PsJN) (Burkholderia phytofirmans).